The sequence spans 337 residues: Receptor like protein kinase S.3 (337 aa).

Residues 50–316 (FKESELFGTE…VNYLEGNDVL (267 aa)) form the Protein kinase domain. Residues 56 to 64 (FGTEANGTV) and Lys78 contribute to the ATP site. At Tyr123 the chain carries Phosphotyrosine. Asp171 (proton acceptor) is an active-site residue.

This sequence belongs to the protein kinase superfamily. Ser/Thr protein kinase family.

The enzyme catalyses L-seryl-[protein] + ATP = O-phospho-L-seryl-[protein] + ADP + H(+). The catalysed reaction is L-threonyl-[protein] + ATP = O-phospho-L-threonyl-[protein] + ADP + H(+). This Arabidopsis thaliana (Mouse-ear cress) protein is Receptor like protein kinase S.3 (LECRKS3).